A 205-amino-acid chain; its full sequence is Protein GrpE (205 aa).

Residues 172–205 (KGSTGPGAPAEPAAAPNPYASNGADTGGSFDTKA) are disordered. Residues 177 to 195 (PGAPAEPAAAPNPYASNGA) show a composition bias toward low complexity.

It belongs to the GrpE family. In terms of assembly, homodimer.

It is found in the cytoplasm. Its function is as follows. Participates actively in the response to hyperosmotic and heat shock by preventing the aggregation of stress-denatured proteins, in association with DnaK and GrpE. It is the nucleotide exchange factor for DnaK and may function as a thermosensor. Unfolded proteins bind initially to DnaJ; upon interaction with the DnaJ-bound protein, DnaK hydrolyzes its bound ATP, resulting in the formation of a stable complex. GrpE releases ADP from DnaK; ATP binding to DnaK triggers the release of the substrate protein, thus completing the reaction cycle. Several rounds of ATP-dependent interactions between DnaJ, DnaK and GrpE are required for fully efficient folding. The chain is Protein GrpE from Caulobacter sp. (strain K31).